Consider the following 250-residue polypeptide: NAD-dependent protein deacylase (250 aa).

A Deacetylase sirtuin-type domain is found at 1 to 250 (MIVEVARVLA…VVHEVRRLLQ (250 aa)). 20-39 (GAGISAESGVPTFRGKDGLW) serves as a coordination point for NAD(+). Residues Tyr-64 and Arg-67 each coordinate substrate. Position 98-101 (98-101 (QNVD)) interacts with NAD(+). The active-site Proton acceptor is His-116. Cys-124, Cys-127, Cys-150, and Cys-153 together coordinate Zn(2+). NAD(+) contacts are provided by residues 190–192 (GTS), 216–218 (NVE), and Ala-234.

This sequence belongs to the sirtuin family. Class III subfamily. Zn(2+) serves as cofactor.

The protein localises to the cytoplasm. The catalysed reaction is N(6)-acetyl-L-lysyl-[protein] + NAD(+) + H2O = 2''-O-acetyl-ADP-D-ribose + nicotinamide + L-lysyl-[protein]. It carries out the reaction N(6)-succinyl-L-lysyl-[protein] + NAD(+) + H2O = 2''-O-succinyl-ADP-D-ribose + nicotinamide + L-lysyl-[protein]. Functionally, NAD-dependent lysine deacetylase and desuccinylase that specifically removes acetyl and succinyl groups on target proteins. Modulates the activities of several proteins which are inactive in their acylated form. Deacetylates the N-terminal lysine residue of Alba, the major archaeal chromatin protein and that, in turn, increases Alba's DNA binding affinity, thereby repressing transcription. The protein is NAD-dependent protein deacylase of Pyrococcus abyssi (strain GE5 / Orsay).